The chain runs to 182 residues: UPF0397 protein llmg_0343 (182 aa).

Helical transmembrane passes span 8–28 (IVVATGIGAALFVIIGWLINI), 42–62 (AVLALFSALFGPLAGFLIGFI), 74–94 (APWWTWVLGSGLMGLFLGFGV), 114–134 (IVQFLANVVVWGLIAPIGDIL), and 146–166 (QGVVAGLVNALTIAVAGTLLL).

The protein belongs to the UPF0397 family.

It is found in the cell membrane. The sequence is that of UPF0397 protein llmg_0343 from Lactococcus lactis subsp. cremoris (strain MG1363).